A 363-amino-acid chain; its full sequence is Dihydroorotate dehydrogenase (quinone) (363 aa).

Residues 62 to 66 (AGFDK) and Thr-86 each bind FMN. Lys-66 is a substrate binding site. Position 111 to 115 (111 to 115 (NRMGF)) interacts with substrate. FMN-binding residues include Asn-142 and Asn-175. Substrate is bound at residue Asn-175. The active-site Nucleophile is the Ser-178. Residue Asn-180 participates in substrate binding. Positions 216 and 244 each coordinate FMN. 245 to 246 (NT) is a substrate binding site. Residues Gly-267, Gly-296, and 317 to 318 (YT) each bind FMN.

This sequence belongs to the dihydroorotate dehydrogenase family. Type 2 subfamily. Monomer. It depends on FMN as a cofactor.

It localises to the cell membrane. The catalysed reaction is (S)-dihydroorotate + a quinone = orotate + a quinol. The protein operates within pyrimidine metabolism; UMP biosynthesis via de novo pathway; orotate from (S)-dihydroorotate (quinone route): step 1/1. In terms of biological role, catalyzes the conversion of dihydroorotate to orotate with quinone as electron acceptor. In Anaeromyxobacter sp. (strain Fw109-5), this protein is Dihydroorotate dehydrogenase (quinone).